Reading from the N-terminus, the 264-residue chain is MKQYLDLLNRILTEGVHKEDRTGTGTISVFGHQMRFNLEEGFPLVTTKKLHLKSIIHELLWFLQGDTNVKYLQDNGVRIWNEWADANGDLGHIYGYQWRSWPDYNGGFIDQISEAIETIKHNPDSRRIIVSAWNVADLNNMNLPPCHAFFQFYVANGRLSLQLYQRSADTFLGVPFNIASYALLLQMVAQVTGLQTGDFVHTLGDTHIYTNHLEQVKLQLSREPRPLPQMKINPDIKDIFSFKYEDFELVNYDPWPHIAGKVSV.

A dUMP-binding site is contributed by Arg-21. Position 51 (His-51) interacts with (6R)-5,10-methylene-5,6,7,8-tetrahydrofolate. Position 126–127 (126–127 (RR)) interacts with dUMP. Cys-146 acts as the Nucleophile in catalysis. Residues 166–169 (RSAD), Asn-177, and 207–209 (HIY) each bind dUMP. Position 169 (Asp-169) interacts with (6R)-5,10-methylene-5,6,7,8-tetrahydrofolate. A (6R)-5,10-methylene-5,6,7,8-tetrahydrofolate-binding site is contributed by Ser-263.

The protein belongs to the thymidylate synthase family. Bacterial-type ThyA subfamily. In terms of assembly, homodimer.

Its subcellular location is the cytoplasm. The enzyme catalyses dUMP + (6R)-5,10-methylene-5,6,7,8-tetrahydrofolate = 7,8-dihydrofolate + dTMP. It functions in the pathway pyrimidine metabolism; dTTP biosynthesis. Catalyzes the reductive methylation of 2'-deoxyuridine-5'-monophosphate (dUMP) to 2'-deoxythymidine-5'-monophosphate (dTMP) while utilizing 5,10-methylenetetrahydrofolate (mTHF) as the methyl donor and reductant in the reaction, yielding dihydrofolate (DHF) as a by-product. This enzymatic reaction provides an intracellular de novo source of dTMP, an essential precursor for DNA biosynthesis. The polypeptide is Thymidylate synthase (Phocaeicola vulgatus (strain ATCC 8482 / DSM 1447 / JCM 5826 / CCUG 4940 / NBRC 14291 / NCTC 11154) (Bacteroides vulgatus)).